A 260-amino-acid chain; its full sequence is Cytosolic Fe-S cluster assembly factor Nubp2 homolog (260 aa).

Residue 14 to 21 (GKGGVGKS) coordinates ATP. [4Fe-4S] cluster-binding residues include Cys-188 and Cys-191.

The protein belongs to the Mrp/NBP35 ATP-binding proteins family. NUBP2/CFD1 subfamily. Heterotetramer of 2 Nubp1 and 2 Nubp2 chains. It depends on [4Fe-4S] cluster as a cofactor.

The protein localises to the cytoplasm. Functionally, component of the cytosolic iron-sulfur (Fe/S) protein assembly (CIA) machinery. Required for maturation of extramitochondrial Fe-S proteins. The Nubp1-Nubp2 heterotetramer forms a Fe-S scaffold complex, mediating the de novo assembly of an Fe-S cluster and its transfer to target apoproteins. The protein is Cytosolic Fe-S cluster assembly factor Nubp2 homolog of Drosophila melanogaster (Fruit fly).